A 731-amino-acid chain; its full sequence is MFRVFGSFGSKGNQSSGEEQSTKTKQVLKQANDFEIALKAMDFVLDDRTDEGLNLLKKAEMETGSDQTILTLARGVIEFLQATLSFETEEMKRAAITLGKAEQMSWKSKQNAEKTNFRSSSIYPPGTVYAVTYTESCLLHALLMLFSESMMEAAKALLKLRRAYTMLQDIMVTVKKAERSKNSSSPSPSEKSQESCGSFVSAETTFISVDIPYKLSSEDKSNPLLLEFAEKIYTMRMGRLSGAHIGNTPSFHRLRDDLGLQTTPSQASDRHSVSDDFDLEQATIDEFIHSGANLCYGILQVVLSLLPPAIGAVLSIVGFKGSREEGLRLVWKAIKERNVHGCIGLLGLMFYYDGPFQFTDADFDIPPNDNGSRALNKSRTNDSSLLPGYMDSATLLHPGKILEDALLKARALFPNSALWLLNEAKMLAGKGRLRDSLALMDSIDVNSIRMRQVKSLMVFERAILLVNLHEYNRAADDLISLLDISDWSHALYTYFAGCCYLENWRMTQLGLLNDGKEQFYKERARELIFDAPSLLGKKTFKSKNLPLDRFMLRKVQQFNNMQKKLNLQEPLDSIATSPVHELAYFYNGYNRMTENDLILTKKMLTEYHNPAIDSEDPDQELIRNLLLSLTLRRLGDAERGLALLDDIVLPKIFYIQNGKVKYFKKTEDPWAYPAALYERALFCWKLGGMESLNECREWLLRAQNYAADYELSTRIGMKIKAALDRVENALA.

Residues 1 to 26 (MFRVFGSFGSKGNQSSGEEQSTKTKQ) are disordered. Positions 10–26 (SKGNQSSGEEQSTKTKQ) are enriched in polar residues. Phosphoserine is present on residues Ser265, Ser268, and Ser378. Thr380 is modified (phosphothreonine). Ser383 and Ser392 each carry phosphoserine.

This sequence belongs to the IML2 family. Interacts with lipid droplet proteins PET10 and PDR16.

The protein resides in the cytoplasm. The protein localises to the nucleus. In terms of biological role, inclusion body (IB) resident protein that interacts strongly with lipid droplet (LD) proteins. Involved in LD-mediated IB clearing after protein folding stress, probably by enabling access to the IBs of an LD-stored soluble sterol derivative that acts as a chaperone in inclusion clearing. The polypeptide is Inclusion body clearance protein IML2 (IML2) (Saccharomyces cerevisiae (strain YJM789) (Baker's yeast)).